A 494-amino-acid chain; its full sequence is Glutamate--tRNA ligase (494 aa).

Positions 9-19 match the 'HIGH' region motif; that stretch reads PSPTGPLHIGS. Residues 249–253 carry the 'KMSKS' region motif; the sequence is KLSKR. Position 252 (Lys-252) interacts with ATP.

The protein belongs to the class-I aminoacyl-tRNA synthetase family. Glutamate--tRNA ligase type 1 subfamily. In terms of assembly, monomer.

The protein resides in the cytoplasm. The enzyme catalyses tRNA(Glu) + L-glutamate + ATP = L-glutamyl-tRNA(Glu) + AMP + diphosphate. Its function is as follows. Catalyzes the attachment of glutamate to tRNA(Glu) in a two-step reaction: glutamate is first activated by ATP to form Glu-AMP and then transferred to the acceptor end of tRNA(Glu). The sequence is that of Glutamate--tRNA ligase from Azobacteroides pseudotrichonymphae genomovar. CFP2.